The primary structure comprises 969 residues: Proprotein convertase subtilisin/kexin type 6 (969 aa).

Residues 1 to 16 (MPPRAPPAPGPRPPPR) are compositionally biased toward pro residues. A disordered region spans residues 1–39 (MPPRAPPAPGPRPPPRAAAATDTAAGAGGAGGAGGAGGP). The signal sequence occupies residues 1-63 (MPPRAPPAPG…LLALPAACSA (63 aa)). Positions 26–39 (GAGGAGGAGGAGGP) are enriched in gly residues. Residues 64–149 (PPPRPVYTNH…QQEVKRRVKR (86 aa)) constitute a propeptide that is removed on maturation. Residues 168-487 (MWYLHCGDKN…FGLVDAEALV (320 aa)) form the Peptidase S8 domain. Active-site charge relay system residues include aspartate 205 and histidine 246. The N-linked (GlcNAc...) asparagine glycan is linked to asparagine 259. Catalysis depends on serine 420, which acts as the Charge relay system. One can recognise a P/Homo B domain in the interval 495–635 (AVPSQHMCVA…SLILYGTAEH (141 aa)). A Cell attachment site motif is present at residues 553–555 (RGD). The segment at 658-683 (EPPKAALSPSQVEVPEDEEDYTAQST) is disordered. FU repeat units follow at residues 692-739 (TSVC…GYFG), 743-790 (ARRC…GFYA), 794-838 (QKNC…GTYF), 842-887 (LIRC…GFYP), and 895-943 (HKVC…ETFC). Residues 695–930 (CHPECGDKGC…GFTQLGTSCI (236 aa)) form a CRM (Cys-rich motif) region. Residues asparagine 914 and asparagine 932 are each glycosylated (N-linked (GlcNAc...) asparagine). A PLAC domain is found at 931–969 (TNHTCSNADETFCEMVKSNRLCERKLFIQFCCRTCLLAG).

The protein belongs to the peptidase S8 family. In terms of assembly, the PACE4A-I precursor protein seems to exist in the reticulum endoplasmic as both a monomer and a dimer-sized complex whereas mature PACE4A-I exists only as a monomer, suggesting that propeptide cleavage affects its tertiary or quaternary structure. Interacts (immature form including the propeptide) with RCN3; probably involved in the maturation and the secretion of PCSK6. It depends on Ca(2+) as a cofactor. In terms of tissue distribution, each PACE4 isoform exhibits a unique restricted distribution. Isoform PACE4A-I is expressed in heart, brain, placenta, lung, skeletal muscle, kidney, pancreas, but at comparatively higher levels in the liver. Isoform PACE4A-II is at least expressed in placenta. Isoform PACE4B was only found in the embryonic kidney cell line from which it was isolated. Isoform PACE4C and isoform PACE4D are expressed in placenta. Isoform PACE4E-I is expressed in cerebellum, placenta and pituitary. Isoform PACE4E-II is at least present in cerebellum.

The protein localises to the secreted. It is found in the endoplasmic reticulum. Its subcellular location is the endomembrane system. In terms of biological role, serine endoprotease that processes various proproteins by cleavage at paired basic amino acids, recognizing the RXXX[KR]R consensus motif. Likely functions in the constitutive secretory pathway, with unique restricted distribution in both neuroendocrine and non-neuroendocrine tissues. This is Proprotein convertase subtilisin/kexin type 6 (PCSK6) from Homo sapiens (Human).